Here is a 145-residue protein sequence, read N- to C-terminus: UPF0260 protein VC_1058 (145 aa).

Belongs to the UPF0260 family.

The sequence is that of UPF0260 protein VC_1058 from Vibrio cholerae serotype O1 (strain ATCC 39315 / El Tor Inaba N16961).